The primary structure comprises 162 residues: Caveolin-2 (162 aa).

The Cytoplasmic portion of the chain corresponds to 1 to 86 (MGLETEKADV…FEISKYVMYK (86 aa)). Tyr19 carries the post-translational modification Phosphotyrosine; by SRC. Ser20 and Ser23 each carry phosphoserine. Tyr27 is modified (phosphotyrosine). Ser36 is subject to Phosphoserine. Residues 87–107 (FLTVFLAIPLAFIAGILFATL) constitute an intramembrane region (helical). Over 108-162 (SCLHIWILMPFVKTCLMVLPSVQTIWKSVTDVVIGPLCTSVGRSFSSVSMQLSHD) the chain is Cytoplasmic.

This sequence belongs to the caveolin family. In terms of assembly, monomer or homodimer. Interacts with CAV1; the interaction forms a stable heterooligomeric complex that is required for targeting to lipid rafts and for caveolae formation. Tyrosine phosphorylated forms do not form heterooligomers with the Tyr-19-phosphorylated form existing as a monomer or dimer, and the Tyr-27-form as a monomer only. Interacts (tyrosine phosphorylated form) with the SH2 domain-containing proteins, RASA1, NCK1 and SRC. Interacts (tyrosine phosphorylated form) with INSR, the interaction (Tyr-27-phosphorylated form) is increased on insulin stimulation. Interacts (Tyr-19 phosphorylated form) with MAPK1 (phosphorylated form); the interaction, promoted by insulin, leads to nuclear location and MAPK1 activation. Interacts with STAT3; the interaction is increased on insulin-induced tyrosine phosphorylation leading to STAT activation. In terms of processing, phosphorylated on serine and tyrosine residues. CAV1 promotes phosphorylation on Ser-23 which then targets the complex to the plasma membrane, lipid rafts and caveolae. Phosphorylation on Ser-36 appears to modulate mitosis in endothelial cells. Phosphorylation on both Tyr-19 and Tyr-27 is required for insulin-induced 'Ser-727' phosphorylation of STAT3 and its activation. Phosphorylation on Tyr-19 is required for insulin-induced phosphorylation of MAPK1 and DNA binding of STAT3. Tyrosine phosphorylation is induced by both EGF and insulin.

The protein resides in the nucleus. It localises to the cytoplasm. It is found in the golgi apparatus membrane. The protein localises to the cell membrane. Its subcellular location is the membrane. The protein resides in the caveola. May act as a scaffolding protein within caveolar membranes. Interacts directly with G-protein alpha subunits and can functionally regulate their activity. Acts as an accessory protein in conjunction with CAV1 in targeting to lipid rafts and driving caveolae formation. The Ser-36 phosphorylated form has a role in modulating mitosis in endothelial cells. Positive regulator of cellular mitogenesis of the MAPK signaling pathway. Required for the insulin-stimulated nuclear translocation and activation of MAPK1 and STAT3, and the subsequent regulation of cell cycle progression. The polypeptide is Caveolin-2 (Cav2) (Mus musculus (Mouse)).